Consider the following 418-residue polypeptide: Alditol oxidase (418 aa).

The region spanning 13-179 (ITYTAKELLR…TSLTLDLEPA (167 aa)) is the FAD-binding PCMH-type domain. Residues 41-47 (VLGSGHS), Ser-106, Ser-111, Gly-114, 118-121 (TGTH), and Val-169 each bind FAD. His-46 bears the Pros-8alpha-FAD histidine mark. Ser-106 is a binding site for D-sorbitol. A xylitol-binding site is contributed by Ser-106. 3 residues coordinate D-sorbitol: Glu-320, Arg-322, and Thr-345. Residues Glu-320, Arg-322, and Thr-345 each contribute to the xylitol site. Arg-322 provides a ligand contact to FAD. Residue His-372 coordinates FAD. Lys-375 serves as a coordination point for D-sorbitol. Lys-375 contacts xylitol.

This sequence belongs to the oxygen-dependent FAD-linked oxidoreductase family. In terms of assembly, monomer. The cofactor is FAD.

The catalysed reaction is an alditol + O2 = an aldose + H2O2. The enzyme catalyses xylitol + O2 = D-xylose + H2O2. It carries out the reaction D-sorbitol + O2 = D-glucose + H2O2. In terms of biological role, oxidase that performs selective oxidation of the terminal primary hydroxyl group of several alditols, with a reduction of O2 to H2O2. Shows highest activity on xylitol and D-sorbitol, and a poor efficiency with D-mannitol and L-threitol. The polypeptide is Alditol oxidase (xyoA) (Streptomyces coelicolor (strain ATCC BAA-471 / A3(2) / M145)).